Reading from the N-terminus, the 314-residue chain is tRNA dimethylallyltransferase 1 (314 aa).

8-15 (GPTGSGKS) serves as a coordination point for ATP. Position 10–15 (10–15 (TGSGKS)) interacts with substrate.

It belongs to the IPP transferase family. As to quaternary structure, monomer. Requires Mg(2+) as cofactor.

The catalysed reaction is adenosine(37) in tRNA + dimethylallyl diphosphate = N(6)-dimethylallyladenosine(37) in tRNA + diphosphate. Its function is as follows. Catalyzes the transfer of a dimethylallyl group onto the adenine at position 37 in tRNAs that read codons beginning with uridine, leading to the formation of N6-(dimethylallyl)adenosine (i(6)A). The protein is tRNA dimethylallyltransferase 1 of Mycobacterium ulcerans (strain Agy99).